Consider the following 215-residue polypeptide: Adenylate kinase (215 aa).

10-15 (GAGKGT) is a binding site for ATP. Residues 30–60 (STGDMLRAAIIKAGTEMGKQAKSVIDAGQLV) form an NMP region. AMP is bound by residues threonine 31, arginine 36, 58–60 (QLV), 86–89 (GFPR), and glutamine 93. The tract at residues 123-160 (GRRAHLPSGRTYHVTFNPSKVEGQDDVTGEPLVIREDD) is LID. ATP-binding positions include arginine 124 and 133–134 (TY). AMP-binding residues include arginine 157 and arginine 168. Lysine 201 serves as a coordination point for ATP.

It belongs to the adenylate kinase family. Monomer.

The protein localises to the cytoplasm. The catalysed reaction is AMP + ATP = 2 ADP. The protein operates within purine metabolism; AMP biosynthesis via salvage pathway; AMP from ADP: step 1/1. Its function is as follows. Catalyzes the reversible transfer of the terminal phosphate group between ATP and AMP. Plays an important role in cellular energy homeostasis and in adenine nucleotide metabolism. The sequence is that of Adenylate kinase from Aliivibrio salmonicida (strain LFI1238) (Vibrio salmonicida (strain LFI1238)).